We begin with the raw amino-acid sequence, 306 residues long: Beta-lactamase (306 aa).

A signal peptide (tat-type signal) is located at residues 1 to 34 (MDRTTARPNRRAVLATGVGAALAATAAAAGPAHA). Serine 82 functions as the Acyl-ester intermediate in the catalytic mechanism. 250–252 (KTG) provides a ligand contact to substrate.

Belongs to the class-A beta-lactamase family. Post-translationally, predicted to be exported by the Tat system. The position of the signal peptide cleavage has not been experimentally proven.

The enzyme catalyses a beta-lactam + H2O = a substituted beta-amino acid. The sequence is that of Beta-lactamase (blaF) from Streptomyces fradiae (Streptomyces roseoflavus).